The following is an 88-amino-acid chain: Defensin-like protein 267 (88 aa).

A signal peptide spans 1 to 23; it reads MMLSKVVLLALLLSLSCLWVAKA. 3 disulfide bridges follow: Cys-45–Cys-63, Cys-51–Cys-68, and Cys-55–Cys-70.

It belongs to the DEFL family.

Its subcellular location is the secreted. This chain is Defensin-like protein 267, found in Arabidopsis thaliana (Mouse-ear cress).